A 146-amino-acid polypeptide reads, in one-letter code: Hemoglobin subunit beta (146 aa).

V1 bears the N-acetylvaline mark. The 145-residue stretch at 2-146 folds into the Globin domain; sequence QLSGEEKAAV…VANALAHKYH (145 aa). The residue at position 44 (S44) is a Phosphoserine. K59 is subject to N6-acetyllysine. H63 serves as a coordination point for heme b. K82 carries the N6-acetyllysine modification. H92 is a binding site for heme b. S-nitrosocysteine is present on C93. K144 carries the post-translational modification N6-acetyllysine.

It belongs to the globin family. As to quaternary structure, heterotetramer of two alpha chains and two beta chains. Red blood cells.

In terms of biological role, involved in oxygen transport from the lung to the various peripheral tissues. This Equus hemionus kulan (Turkmenian kulan) protein is Hemoglobin subunit beta (HBB).